The sequence spans 280 residues: MSEYSAGRSGFSPAYLDRVGSSFTDFLAAAAPHLLPGSRPVPQIPVGNVTPHGTTIVSVTYDGGVLMGGDRRATMGNLISSREIEKVYPADAWSVIGIAGAAGIAIEMVRLYQVELEHYEKIEGLTLSLDGKANRLAQMIRGNLGAALQGLAVVPLFAGFDLDAAPGAAPGRIFSYDVTGGNYEERGYSAVGSGSLFARNSLKKTWRPNLDGDAATRSLVEALYDAADDDSATGGPDPVRRLYPIVYRVDAEGAVRVPDDEIAAVATRITDERSAADGQG.

The propeptide at 1 to 53 (MSEYSAGRSGFSPAYLDRVGSSFTDFLAAAAPHLLPGSRPVPQIPVGNVTPHG) is removed in mature form; by autocatalysis. The active-site Nucleophile is the Thr-54.

This sequence belongs to the peptidase T1B family. As to quaternary structure, the 20S proteasome core is composed of 14 alpha and 14 beta subunits that assemble into four stacked heptameric rings, resulting in a barrel-shaped structure. The two inner rings, each composed of seven catalytic beta subunits, are sandwiched by two outer rings, each composed of seven alpha subunits. The catalytic chamber with the active sites is on the inside of the barrel. Has a gated structure, the ends of the cylinder being occluded by the N-termini of the alpha-subunits. Is capped by the proteasome-associated ATPase, ARC.

Its subcellular location is the cytoplasm. It catalyses the reaction Cleavage of peptide bonds with very broad specificity.. The protein operates within protein degradation; proteasomal Pup-dependent pathway. Its activity is regulated as follows. The formation of the proteasomal ATPase ARC-20S proteasome complex, likely via the docking of the C-termini of ARC into the intersubunit pockets in the alpha-rings, may trigger opening of the gate for substrate entry. Interconversion between the open-gate and close-gate conformations leads to a dynamic regulation of the 20S proteasome proteolysis activity. Functionally, component of the proteasome core, a large protease complex with broad specificity involved in protein degradation. The sequence is that of Proteasome subunit beta from Geodermatophilus obscurus (strain ATCC 25078 / DSM 43160 / JCM 3152 / CCUG 61914 / KCC A-0152 / KCTC 9177 / NBRC 13315 / NRRL B-3577 / G-20).